The sequence spans 505 residues: Adenylosuccinate synthetase, chloroplastic (505 aa).

A chloroplast-targeting transit peptide spans 1–60 (MTTMNISTLRLDSNPITTSTKSTTHRSGALGYNGSYSCRLLQFQKKNKAPSIIVCSTKPL). GTP contacts are provided by residues 92–98 (GDEGKGK) and 120–122 (GHT). Catalysis depends on D93, which acts as the Proton acceptor. D93 and G120 together coordinate Mg(2+). IMP contacts are provided by residues 93–96 (DEGK), 118–121 (NAGH), T210, R224, Q304, T319, and R383. Catalysis depends on H121, which acts as the Proton donor. 379–385 (TTTGRPR) contacts substrate. Residues R385, 411 to 413 (KLD), and 494 to 496 (GVG) contribute to the GTP site.

The protein belongs to the adenylosuccinate synthetase family. Homodimer. Mg(2+) serves as cofactor.

The protein resides in the plastid. The protein localises to the chloroplast. It catalyses the reaction IMP + L-aspartate + GTP = N(6)-(1,2-dicarboxyethyl)-AMP + GDP + phosphate + 2 H(+). Its pathway is purine metabolism; AMP biosynthesis via de novo pathway; AMP from IMP: step 1/2. Functionally, plays an important role in the de novo pathway and in the salvage pathway of purine nucleotide biosynthesis. Catalyzes the first committed step in the biosynthesis of AMP from IMP. The protein is Adenylosuccinate synthetase, chloroplastic of Nicotiana tabacum (Common tobacco).